The following is a 295-amino-acid chain: Regucalcin (295 aa).

E18 provides a ligand contact to a divalent metal cation. Substrate contacts are provided by R100, N102, and D120. N150 and D200 together coordinate a divalent metal cation. The Proton donor/acceptor role is filled by D200.

The protein belongs to the SMP-30/CGR1 family. Requires Zn(2+) as cofactor. Mn(2+) is required as a cofactor. It depends on Ca(2+) as a cofactor. The cofactor is Mg(2+).

The protein resides in the cytoplasm. The enzyme catalyses D-glucono-1,5-lactone + H2O = D-gluconate + H(+). It functions in the pathway cofactor biosynthesis; L-ascorbate biosynthesis via UDP-alpha-D-glucuronate pathway; L-ascorbate from UDP-alpha-D-glucuronate: step 3/4. Its function is as follows. Gluconolactonase with low activity towards other sugar lactones, including gulonolactone and galactonolactone. Catalyzes a key step in ascorbic acid (vitamin C) biosynthesis. Can also hydrolyze diisopropyl phosphorofluoridate and phenylacetate (in vitro). Calcium-binding protein. Modulates Ca(2+) signaling, and Ca(2+)-dependent cellular processes and enzyme activities. In Danio rerio (Zebrafish), this protein is Regucalcin.